The primary structure comprises 87 residues: Translation initiation factor IF-1 2 (87 aa).

In terms of domain architecture, S1-like spans 1 to 72 (MAKEEVIEME…TKGRINFRHK (72 aa)).

It belongs to the IF-1 family. As to quaternary structure, component of the 30S ribosomal translation pre-initiation complex which assembles on the 30S ribosome in the order IF-2 and IF-3, IF-1 and N-formylmethionyl-tRNA(fMet); mRNA recruitment can occur at any time during PIC assembly.

Its subcellular location is the cytoplasm. Functionally, one of the essential components for the initiation of protein synthesis. Stabilizes the binding of IF-2 and IF-3 on the 30S subunit to which N-formylmethionyl-tRNA(fMet) subsequently binds. Helps modulate mRNA selection, yielding the 30S pre-initiation complex (PIC). Upon addition of the 50S ribosomal subunit IF-1, IF-2 and IF-3 are released leaving the mature 70S translation initiation complex. This is Translation initiation factor IF-1 2 from Thiobacillus denitrificans (strain ATCC 25259 / T1).